Consider the following 264-residue polypeptide: Thymidylate synthase (264 aa).

DUMP is bound by residues Arg21 and 126–127; that span reads RR. Cys146 acts as the Nucleophile in catalysis. Residues 166–169, Asn177, and 207–209 contribute to the dUMP site; these read RSAD and HLY. Asp169 contributes to the (6R)-5,10-methylene-5,6,7,8-tetrahydrofolate binding site. Ala263 provides a ligand contact to (6R)-5,10-methylene-5,6,7,8-tetrahydrofolate.

This sequence belongs to the thymidylate synthase family. Bacterial-type ThyA subfamily. As to quaternary structure, homodimer.

It localises to the cytoplasm. It catalyses the reaction dUMP + (6R)-5,10-methylene-5,6,7,8-tetrahydrofolate = 7,8-dihydrofolate + dTMP. It participates in pyrimidine metabolism; dTTP biosynthesis. Its function is as follows. Catalyzes the reductive methylation of 2'-deoxyuridine-5'-monophosphate (dUMP) to 2'-deoxythymidine-5'-monophosphate (dTMP) while utilizing 5,10-methylenetetrahydrofolate (mTHF) as the methyl donor and reductant in the reaction, yielding dihydrofolate (DHF) as a by-product. This enzymatic reaction provides an intracellular de novo source of dTMP, an essential precursor for DNA biosynthesis. The protein is Thymidylate synthase of Bradyrhizobium sp. (strain ORS 278).